Here is a 166-residue protein sequence, read N- to C-terminus: uncharacterized protein (166 aa).

This sequence to M.jannaschii MJ0992.

This is an uncharacterized protein from Methanocaldococcus jannaschii (strain ATCC 43067 / DSM 2661 / JAL-1 / JCM 10045 / NBRC 100440) (Methanococcus jannaschii).